Reading from the N-terminus, the 189-residue chain is UPF0301 protein HRM2_24640 (189 aa).

The protein belongs to the UPF0301 (AlgH) family.

In Desulforapulum autotrophicum (strain ATCC 43914 / DSM 3382 / VKM B-1955 / HRM2) (Desulfobacterium autotrophicum), this protein is UPF0301 protein HRM2_24640.